A 317-amino-acid polypeptide reads, in one-letter code: Transaldolase (317 aa).

Catalysis depends on lysine 132, which acts as the Schiff-base intermediate with substrate.

The protein belongs to the transaldolase family. Type 1 subfamily. In terms of assembly, homodimer.

Its subcellular location is the cytoplasm. It catalyses the reaction D-sedoheptulose 7-phosphate + D-glyceraldehyde 3-phosphate = D-erythrose 4-phosphate + beta-D-fructose 6-phosphate. The protein operates within carbohydrate degradation; pentose phosphate pathway; D-glyceraldehyde 3-phosphate and beta-D-fructose 6-phosphate from D-ribose 5-phosphate and D-xylulose 5-phosphate (non-oxidative stage): step 2/3. Its function is as follows. Transaldolase is important for the balance of metabolites in the pentose-phosphate pathway. The chain is Transaldolase from Photorhabdus laumondii subsp. laumondii (strain DSM 15139 / CIP 105565 / TT01) (Photorhabdus luminescens subsp. laumondii).